The primary structure comprises 165 residues: 3-hydroxyacyl-[acyl-carrier-protein] dehydratase FabZ (165 aa).

The active site involves His64.

It belongs to the thioester dehydratase family. FabZ subfamily.

It is found in the cytoplasm. It catalyses the reaction a (3R)-hydroxyacyl-[ACP] = a (2E)-enoyl-[ACP] + H2O. Functionally, involved in unsaturated fatty acids biosynthesis. Catalyzes the dehydration of short chain beta-hydroxyacyl-ACPs and long chain saturated and unsaturated beta-hydroxyacyl-ACPs. This is 3-hydroxyacyl-[acyl-carrier-protein] dehydratase FabZ from Acidiphilium cryptum (strain JF-5).